The following is a 297-amino-acid chain: Alpha-tubulin N-acetyltransferase 1 (297 aa).

The region spanning 1–186 (MEFDFDVHKI…NNFVVFDGFF (186 aa)) is the N-acetyltransferase domain. Acetyl-CoA-binding positions include 120–133 (FYIHETLQRHGFGK) and 156–165 (SEKFLSFLRK). The disordered stretch occupies residues 269 to 297 (LHRTANSEQEDHSQRRRTSSLNRPQSIHH). Residues 287-297 (SSLNRPQSIHH) show a composition bias toward polar residues.

It belongs to the acetyltransferase ATAT1 family.

Its subcellular location is the cytoplasm. The protein localises to the membrane. It is found in the clathrin-coated pit. It localises to the cell junction. The protein resides in the focal adhesion. Its subcellular location is the cell projection. The protein localises to the axon. It is found in the cytoskeleton. It localises to the spindle. The catalysed reaction is L-lysyl-[alpha-tubulin] + acetyl-CoA = N(6)-acetyl-L-lysyl-[alpha-tubulin] + CoA + H(+). In terms of biological role, specifically acetylates 'Lys-40' in alpha-tubulin on the lumenal side of microtubules. Promotes microtubule destabilization and accelerates microtubule dynamics; this activity may be independent of acetylation activity. Acetylates alpha-tubulin with a slow enzymatic rate, due to a catalytic site that is not optimized for acetyl transfer. Enters the microtubule through each end and diffuses quickly throughout the lumen of microtubules. Acetylates only long/old microtubules because of its slow acetylation rate since it does not have time to act on dynamically unstable microtubules before the enzyme is released. May be involved in neuron development. The protein is Alpha-tubulin N-acetyltransferase 1 of Xenopus tropicalis (Western clawed frog).